A 236-amino-acid polypeptide reads, in one-letter code: Phosphoribosylaminoimidazole-succinocarboxamide synthase (236 aa).

The protein belongs to the SAICAR synthetase family.

The catalysed reaction is 5-amino-1-(5-phospho-D-ribosyl)imidazole-4-carboxylate + L-aspartate + ATP = (2S)-2-[5-amino-1-(5-phospho-beta-D-ribosyl)imidazole-4-carboxamido]succinate + ADP + phosphate + 2 H(+). It functions in the pathway purine metabolism; IMP biosynthesis via de novo pathway; 5-amino-1-(5-phospho-D-ribosyl)imidazole-4-carboxamide from 5-amino-1-(5-phospho-D-ribosyl)imidazole-4-carboxylate: step 1/2. In Wolinella succinogenes (strain ATCC 29543 / DSM 1740 / CCUG 13145 / JCM 31913 / LMG 7466 / NCTC 11488 / FDC 602W) (Vibrio succinogenes), this protein is Phosphoribosylaminoimidazole-succinocarboxamide synthase.